Consider the following 148-residue polypeptide: Endothelial differentiation-related factor 1 (148 aa).

Ala-2 carries the N-acetylalanine modification. Ser-4 carries the post-translational modification Phosphoserine. Lys-25 bears the N6-methyllysine mark. A disordered region spans residues Arg-34–Glu-67. Positions Asp-37–Arg-113 are interaction with NR5A2, PPARG and NR1H3. The segment covering Gln-48–Thr-58 has biased composition (polar residues). Residues His-69–Asp-108 are interaction with TBP and NR5A1. An IQ motif motif is present at residues Ile-81–Lys-88. The region spanning Ile-81 to Lys-135 is the HTH cro/C1-type domain. Positions Gln-92–Ser-111 form a DNA-binding region, H-T-H motif.

Interacts with TBP and the transcription factor IID (TFIID) complex, NR5A2, NR1H3 and PPARG. Interaction with TBP is regulated by phosphorylation. Binds NR5A1, ATF1, FOS and JUN via their conserved basic region. Binding to calmodulin is regulated by calcium and phosphorylation of the IQ motif. In terms of processing, phosphorylated. In terms of tissue distribution, expressed in brain, liver, kidney and heart (at protein level). Also expressed in testis.

It is found in the cytoplasm. It localises to the nucleus. Functionally, transcriptional coactivator stimulating NR5A1 and ligand-dependent NR1H3/LXRA and PPARG transcriptional activities. Enhances the DNA-binding activity of ATF1, ATF2, CREB1 and NR5A1. Regulates nitric oxid synthase activity probably by sequestering calmodulin in the cytoplasm. Might function in endothelial cells differentiation, hormone-induced cardiomyocytes hypertrophy and lipid metabolism. This Mus musculus (Mouse) protein is Endothelial differentiation-related factor 1 (Edf1).